Reading from the N-terminus, the 231-residue chain is MAGKKVLIVYAHQEPRSFNGSLKNVAVDELSRQGCTVTVSDLYAMNFEPRATKKDITGALSNPEVFHYGVETHEAYKQRSLASDITDEQKKVQEADLVIFQFPLYWFSVPAILKGWMDRVLCQGFAFDIPGFYDSGLLQGKLALLSVTTGGTAEMYTKTGVNGDFRYFLWPLQHGTLHFCGFKVLAPQISFAPEIASEEERKGMVAAWSQRLQTIWKEEPIPCTAHWYFRQ.

FAD contacts are provided by residues His12 and 18–21 (FNGS). At Ser80 the chain carries Phosphoserine. 104–107 (LYWF) lines the FAD pocket. 127–129 (FDI) is a binding site for substrate. Residues 148 to 151 (TTGG) and Tyr156 contribute to the FAD site. Zn(2+) is bound by residues His174 and His178. Glu194 serves as a coordination point for FAD. At Ser197 the chain carries Phosphoserine. Arg201 contacts FAD. Cys223 contributes to the Zn(2+) binding site.

This sequence belongs to the NAD(P)H dehydrogenase (quinone) family. As to quaternary structure, homodimer. Zn(2+) serves as cofactor. The cofactor is FAD.

Its subcellular location is the cytoplasm. It carries out the reaction 1-(beta-D-ribofuranosyl)-1,4-dihydronicotinamide + a quinone + H(+) = beta-nicotinamide D-riboside + a quinol. The enzyme apparently serves as a quinone reductase in connection with conjugation reactions of hydroquinones involved in detoxification pathways as well as in biosynthetic processes such as the vitamin K-dependent gamma-carboxylation of glutamate residues in prothrombin synthesis. The sequence is that of Ribosyldihydronicotinamide dehydrogenase [quinone] (NQO2) from Pongo abelii (Sumatran orangutan).